Here is a 332-residue protein sequence, read N- to C-terminus: o-succinylbenzoate synthase (332 aa).

Lys-135 serves as the catalytic Proton donor. The Mg(2+) site is built by Asp-163, Glu-192, and Asp-215. Lys-241 serves as the catalytic Proton acceptor.

Belongs to the mandelate racemase/muconate lactonizing enzyme family. MenC type 1 subfamily. Requires a divalent metal cation as cofactor.

The catalysed reaction is (1R,6R)-6-hydroxy-2-succinyl-cyclohexa-2,4-diene-1-carboxylate = 2-succinylbenzoate + H2O. The protein operates within quinol/quinone metabolism; 1,4-dihydroxy-2-naphthoate biosynthesis; 1,4-dihydroxy-2-naphthoate from chorismate: step 4/7. It participates in quinol/quinone metabolism; menaquinone biosynthesis. In terms of biological role, converts 2-succinyl-6-hydroxy-2,4-cyclohexadiene-1-carboxylate (SHCHC) to 2-succinylbenzoate (OSB). In Vibrio cholerae serotype O1 (strain ATCC 39315 / El Tor Inaba N16961), this protein is o-succinylbenzoate synthase.